The primary structure comprises 1515 residues: Glutamate synthase [NADPH] large chain (1515 aa).

Residues 1–36 (MTTELNQGEQFVADFRANAAALTTANAYNPEDEHDA) constitute a propeptide that is removed on maturation. The For GATase activity role is filled by C37. The Glutamine amidotransferase type-2 domain occupies 37–432 (CGVGFIAAID…PGEMIAVDLQ (396 aa)). A disordered region spans residues 916–937 (AKSDSGEGGEDPARFRPDKNGD). A compositionally biased stretch (basic and acidic residues) spans 926-936 (DPARFRPDKNG). FMN-binding positions include 1085–1142 (LSEV…IMVR) and 1086–1142 (SEVH…IMVR). [3Fe-4S] cluster-binding residues include C1138, C1144, and C1149.

It belongs to the glutamate synthase family. Aggregate of 4 catalytic active heterodimers, consisting of a large and a small subunit. It depends on [3Fe-4S] cluster as a cofactor. Requires FAD as cofactor. The cofactor is FMN.

The catalysed reaction is 2 L-glutamate + NADP(+) = L-glutamine + 2-oxoglutarate + NADPH + H(+). It functions in the pathway amino-acid biosynthesis; L-glutamate biosynthesis via GLT pathway; L-glutamate from 2-oxoglutarate and L-glutamine (NADP(+) route): step 1/1. The protein operates within energy metabolism; nitrogen metabolism. This Azospirillum brasilense protein is Glutamate synthase [NADPH] large chain (gltB).